Consider the following 265-residue polypeptide: 6-oxopurine nucleoside phosphorylase (265 aa).

Residues S10, 49 to 50 (RH), and 82 to 83 (SA) contribute to the phosphate site. 2 disulfides stabilise this stretch: C136-C202 and C162-C190. Substrate is bound at residue M187. T188 is a phosphate binding site. 211–213 (NYA) contributes to the substrate binding site. A disulfide bridge links C254 with C256.

It belongs to the PNP/MTAP phosphorylase family. MTAP subfamily. As to quaternary structure, homohexamer. Dimer of a homotrimer.

The catalysed reaction is a purine D-ribonucleoside + phosphate = a purine nucleobase + alpha-D-ribose 1-phosphate. The enzyme catalyses guanosine + phosphate = alpha-D-ribose 1-phosphate + guanine. It catalyses the reaction inosine + phosphate = alpha-D-ribose 1-phosphate + hypoxanthine. The protein operates within purine metabolism; purine nucleoside salvage. Its function is as follows. Purine nucleoside phosphorylase which is highly specific for 6-oxopurine nucleosides. Cleaves guanosine or inosine to respective bases and sugar-1-phosphate molecules. Involved in purine salvage. The chain is 6-oxopurine nucleoside phosphorylase from Pyrococcus furiosus (strain ATCC 43587 / DSM 3638 / JCM 8422 / Vc1).